The sequence spans 86 residues: Cell division topological specificity factor (86 aa).

It belongs to the MinE family.

In terms of biological role, prevents the cell division inhibition by proteins MinC and MinD at internal division sites while permitting inhibition at polar sites. This ensures cell division at the proper site by restricting the formation of a division septum at the midpoint of the long axis of the cell. The protein is Cell division topological specificity factor of Shewanella sediminis (strain HAW-EB3).